Reading from the N-terminus, the 227-residue chain is Probable septum site-determining protein MinC (227 aa).

It belongs to the MinC family. As to quaternary structure, interacts with MinD and FtsZ.

Cell division inhibitor that blocks the formation of polar Z ring septums. Rapidly oscillates between the poles of the cell to destabilize FtsZ filaments that have formed before they mature into polar Z rings. Prevents FtsZ polymerization. This Bacillus pumilus (strain SAFR-032) protein is Probable septum site-determining protein MinC.